We begin with the raw amino-acid sequence, 191 residues long: Small ribosomal subunit protein uS5 (191 aa).

An S5 DRBM domain is found at 20 to 83 (FADRLVAINR…EQAKRQMIRV (64 aa)). Residues 158-191 (TSPRMVAQRRGKKVSDILKKDGEPAEAAAEPAEA) are disordered. Residues 170 to 180 (KVSDILKKDGE) are compositionally biased toward basic and acidic residues. A compositionally biased stretch (low complexity) spans 182 to 191 (AEAAAEPAEA).

The protein belongs to the universal ribosomal protein uS5 family. Part of the 30S ribosomal subunit. Contacts proteins S4 and S8.

With S4 and S12 plays an important role in translational accuracy. In terms of biological role, located at the back of the 30S subunit body where it stabilizes the conformation of the head with respect to the body. This chain is Small ribosomal subunit protein uS5, found in Dinoroseobacter shibae (strain DSM 16493 / NCIMB 14021 / DFL 12).